The sequence spans 420 residues: Multiple sugar-binding protein (420 aa).

Residues 1 to 22 (MKWYKKIGLLGIVGLTSVLLAA) form the signal peptide. Residue Cys23 is the site of N-palmitoyl cysteine attachment. Residue Cys23 is the site of S-diacylglycerol cysteine attachment.

Belongs to the bacterial solute-binding protein 1 family.

The protein resides in the cell membrane. Its function is as follows. Involved in a binding protein-dependent transport system responsible for the uptake of melibiose, raffinose and isomaltotriose. The polypeptide is Multiple sugar-binding protein (Streptococcus mutans serotype c (strain ATCC 700610 / UA159)).